The sequence spans 158 residues: NADH-quinone oxidoreductase subunit B (158 aa).

C37, C38, C102, and C132 together coordinate [4Fe-4S] cluster.

Belongs to the complex I 20 kDa subunit family. As to quaternary structure, NDH-1 is composed of 14 different subunits. Subunits NuoB, C, D, E, F, and G constitute the peripheral sector of the complex. Requires [4Fe-4S] cluster as cofactor.

It localises to the cell inner membrane. It carries out the reaction a quinone + NADH + 5 H(+)(in) = a quinol + NAD(+) + 4 H(+)(out). Functionally, NDH-1 shuttles electrons from NADH, via FMN and iron-sulfur (Fe-S) centers, to quinones in the respiratory chain. Couples the redox reaction to proton translocation (for every two electrons transferred, four hydrogen ions are translocated across the cytoplasmic membrane), and thus conserves the redox energy in a proton gradient. The polypeptide is NADH-quinone oxidoreductase subunit B (Alkalilimnicola ehrlichii (strain ATCC BAA-1101 / DSM 17681 / MLHE-1)).